The following is a 428-amino-acid chain: NADH-ubiquinone oxidoreductase chain 2 (428 aa).

14 consecutive transmembrane segments (helical) span residues 22–42 (IAFLSLLGYFVIMLNIWLHFG), 59–79 (LDESILSALLFILFLGLVIMN), 84–104 (LGWEFHLLLMGGLTGAIYMLT), 108–128 (LLLMVVGFEFLNLSTYLILSL), 140–160 (LLSSAFYTTLLLLAISFFYGL), 185–205 (ILLLGTIAFKLGLVPAHLWVP), 218–238 (WMGSVPKAAVLLWLPTIYPLL), 241–261 (LAPFLLVLSALSFLLSAVLMA), 269–289 (FLAYSAIGHLGFVVAAFAIGD), 292–312 (AYGYYIFIYMIATLAQFVLLS), 332–352 (LGLGFLVIVLTMASLPPFAGF), 356–376 (LLVLFGFLEIGYGIFAVLLIL), 384–404 (YYLKWIQTTFFSVVPFASAPI), and 408–428 (YPNLVSFLVTLILPSTLLLLL).

The protein belongs to the complex I subunit 2 family.

It localises to the mitochondrion inner membrane. It carries out the reaction a ubiquinone + NADH + 5 H(+)(in) = a ubiquinol + NAD(+) + 4 H(+)(out). In terms of biological role, core subunit of the mitochondrial membrane respiratory chain NADH dehydrogenase (Complex I) that is believed to belong to the minimal assembly required for catalysis. Complex I functions in the transfer of electrons from NADH to the respiratory chain. The immediate electron acceptor for the enzyme is believed to be ubiquinone. The polypeptide is NADH-ubiquinone oxidoreductase chain 2 (Hyaloraphidium curvatum (Lower fungus)).